We begin with the raw amino-acid sequence, 384 residues long: MKSGRYIGVMSGTSLDGVDVVLAAIDEHMVAQQASLSWPMPPEIKKAILDICQGQPLTLSQLGRLDHQLGCLFADAVNALMEQQKLKPEDVMAIGCHGQTVWHEPTGSAPHTMQIGDNNQIVARTGVSVVGDFRRRDMALGGQGAPLVPAFHQALLAHPTERRMVLNIGGIANLSLLFPGQPVKGFDTGPGNMLMDAWIWRQKGKPFDKDGEWAASGNVVQPLLQKMLRDPYFSTPAPKSTGREYFNYGWIERQLSSFAGLPAQDVQATLLELTASTIARDVQLSGGAERLMICGGGGRNPRLVARLAALLPGTEVSSTDEMGIRGDDMEALAFAWLAYRTLSGKPGNLPSVTGAREASVIGAVFPANPLNNRSLPTFPAPPGR.

An ATP-binding site is contributed by 12 to 19 (GTSLDGVD).

Belongs to the anhydro-N-acetylmuramic acid kinase family.

The catalysed reaction is 1,6-anhydro-N-acetyl-beta-muramate + ATP + H2O = N-acetyl-D-muramate 6-phosphate + ADP + H(+). Its pathway is amino-sugar metabolism; 1,6-anhydro-N-acetylmuramate degradation. It functions in the pathway cell wall biogenesis; peptidoglycan recycling. Its function is as follows. Catalyzes the specific phosphorylation of 1,6-anhydro-N-acetylmuramic acid (anhMurNAc) with the simultaneous cleavage of the 1,6-anhydro ring, generating MurNAc-6-P. Is required for the utilization of anhMurNAc either imported from the medium or derived from its own cell wall murein, and thus plays a role in cell wall recycling. The sequence is that of Anhydro-N-acetylmuramic acid kinase from Cronobacter sakazakii (strain ATCC BAA-894) (Enterobacter sakazakii).